A 248-amino-acid polypeptide reads, in one-letter code: 14-3-3 protein sigma (248 aa).

A phosphoserine mark is found at serine 5, serine 74, and serine 248.

It belongs to the 14-3-3 family. As to quaternary structure, homodimer. Interacts with KRT17 and SAMSN1. Found in a complex with XPO7, EIF4A1, ARHGAP1, VPS26A, VPS29 and VPS35. Interacts with GAB2. Interacts with SRPK2. Interacts with COPS6. Interacts with COP1; this interaction leads to proteasomal degradation. Interacts with the 'Thr-369' phosphorylated form of DAPK2. Interacts with PI4KB. Interacts with SLITRK1. Interacts with LRRK2; this interaction is dependent on LRRK2 phosphorylation. Interacts with PKP3 (via N-terminus); the interaction maintains the cytoplasmic pool of PKP3, facilitates PKP3 exchange at desmosomes and restricts PKP3 localization to existing desmosome cell junctions. Interacts with LCP2. In terms of processing, ubiquitinated. Ubiquitination by RFFL induces proteasomal degradation and indirectly regulates p53/TP53 activation.

It is found in the cytoplasm. It localises to the nucleus. Its subcellular location is the secreted. Functionally, adapter protein implicated in the regulation of a large spectrum of both general and specialized signaling pathways. Binds to a large number of partners, usually by recognition of a phosphoserine or phosphothreonine motif. Binding generally results in the modulation of the activity of the binding partner. Promotes cytosolic retention of GBP1 GTPase by binding to phosphorylated GBP1, thereby inhibiting the innate immune response. Also acts as a TP53/p53-regulated inhibitor of G2/M progression. When bound to KRT17, regulates protein synthesis and epithelial cell growth by stimulating Akt/mTOR pathway. Acts to maintain desmosome cell junction adhesion in epithelial cells via interacting with and sequestering PKP3 to the cytoplasm, thereby restricting its translocation to existing desmosome structures and therefore maintaining desmosome protein homeostasis. Also acts to facilitate PKP3 exchange at desmosome plaques, thereby maintaining keratinocyte intercellular adhesion. May also regulate MDM2 autoubiquitination and degradation and thereby activate p53/TP53. In Bos taurus (Bovine), this protein is 14-3-3 protein sigma (SFN).